We begin with the raw amino-acid sequence, 282 residues long: Probable endonuclease 4 (282 aa).

Zn(2+) contacts are provided by histidine 69, histidine 109, glutamate 145, aspartate 179, histidine 182, histidine 216, aspartate 229, histidine 231, and glutamate 261.

It belongs to the AP endonuclease 2 family. Zn(2+) is required as a cofactor.

It catalyses the reaction Endonucleolytic cleavage to 5'-phosphooligonucleotide end-products.. In terms of biological role, endonuclease IV plays a role in DNA repair. It cleaves phosphodiester bonds at apurinic or apyrimidinic (AP) sites, generating a 3'-hydroxyl group and a 5'-terminal sugar phosphate. This Campylobacter hominis (strain ATCC BAA-381 / DSM 21671 / CCUG 45161 / LMG 19568 / NCTC 13146 / CH001A) protein is Probable endonuclease 4.